Consider the following 267-residue polypeptide: Malonyl-[acyl-carrier protein] O-methyltransferase (267 aa).

The protein belongs to the methyltransferase superfamily.

The catalysed reaction is malonyl-[ACP] + S-adenosyl-L-methionine = malonyl-[ACP] methyl ester + S-adenosyl-L-homocysteine. Its pathway is cofactor biosynthesis; biotin biosynthesis. In terms of biological role, converts the free carboxyl group of a malonyl-thioester to its methyl ester by transfer of a methyl group from S-adenosyl-L-methionine (SAM). It allows to synthesize pimeloyl-ACP via the fatty acid synthetic pathway. The chain is Malonyl-[acyl-carrier protein] O-methyltransferase from Geobacter sulfurreducens (strain ATCC 51573 / DSM 12127 / PCA).